The primary structure comprises 85 residues: Probable dolichol-phosphate mannosyltransferase subunit 3 (85 aa).

2 helical membrane passes run 13 to 33 (VLLV…LSYI) and 37 to 57 (AHCL…VATF).

This sequence belongs to the DPM3 family.

It is found in the endoplasmic reticulum membrane. The protein operates within protein modification; protein glycosylation. Functionally, stabilizer subunit of the dolichol-phosphate-mannose synthase complex. The chain is Probable dolichol-phosphate mannosyltransferase subunit 3 from Caenorhabditis briggsae.